Consider the following 263-residue polypeptide: Protein YpjB (263 aa).

Acidic residues predominate over residues 233-244 (DFDDSSSEDDPV). Positions 233–263 (DFDDSSSEDDPVENSPVVTSPVVSSSKSSFQ) are disordered. The span at 245–263 (ENSPVVTSPVVSSSKSSFQ) shows a compositional bias: low complexity.

The chain is Protein YpjB (ypjB) from Escherichia coli (strain K12).